The sequence spans 259 residues: Triosephosphate isomerase (259 aa).

10–12 serves as a coordination point for substrate; it reads NWK. Histidine 102 functions as the Electrophile in the catalytic mechanism. Glutamate 174 acts as the Proton acceptor in catalysis. Residues glycine 180, serine 220, and 241 to 242 each bind substrate; that span reads GG.

It belongs to the triosephosphate isomerase family. As to quaternary structure, homodimer.

Its subcellular location is the cytoplasm. The enzyme catalyses D-glyceraldehyde 3-phosphate = dihydroxyacetone phosphate. The protein operates within carbohydrate biosynthesis; gluconeogenesis. It participates in carbohydrate degradation; glycolysis; D-glyceraldehyde 3-phosphate from glycerone phosphate: step 1/1. Involved in the gluconeogenesis. Catalyzes stereospecifically the conversion of dihydroxyacetone phosphate (DHAP) to D-glyceraldehyde-3-phosphate (G3P). This chain is Triosephosphate isomerase, found in Cutibacterium acnes (strain DSM 16379 / KPA171202) (Propionibacterium acnes).